We begin with the raw amino-acid sequence, 334 residues long: Myo-inositol 2-dehydrogenase (334 aa).

The protein belongs to the Gfo/Idh/MocA family.

It catalyses the reaction myo-inositol + NAD(+) = scyllo-inosose + NADH + H(+). The protein operates within polyol metabolism; myo-inositol metabolism. In terms of biological role, catalyzes the NAD(+)-dependent oxidation of myo-inositol (MI) to 2-keto-myo-inositol (scyllo-inosose), and thus probably functions in a myo-inositol degradation pathway together with IolM, IolN and IolO. Has no activity with scyllo-inositol and much reduced activity (78-fold lower catalytic efficiency) with 1D-chiro-inositol. The chain is Myo-inositol 2-dehydrogenase from Thermotoga maritima (strain ATCC 43589 / DSM 3109 / JCM 10099 / NBRC 100826 / MSB8).